We begin with the raw amino-acid sequence, 248 residues long: uncharacterized protein (248 aa).

The chain crosses the membrane as a helical span at residues 104–122; sequence CDVAACVGATWIAGGFAGA.

It localises to the membrane. This is an uncharacterized protein from Escherichia coli (strain K12).